The chain runs to 543 residues: Thermosome subunit beta (543 aa).

Residues 522–543 are disordered; it reads TKSSSSSSNPPKSGSSSESSED. Over residues 523–543 the composition is skewed to low complexity; the sequence is KSSSSSSNPPKSGSSSESSED.

The protein belongs to the TCP-1 chaperonin family. Forms a Heterooligomeric complex of two stacked eight-membered rings. The N-terminus is blocked.

Functionally, molecular chaperone; binds unfolded polypeptides in vitro, and has a weak ATPase activity. This Thermoplasma acidophilum (strain ATCC 25905 / DSM 1728 / JCM 9062 / NBRC 15155 / AMRC-C165) protein is Thermosome subunit beta (thsB).